Consider the following 632-residue polypeptide: tRNA endonuclease VMS1 (632 aa).

The C2H2-type zinc-finger motif lies at 72-96 (MRCSVCQMSFDSRNEQKAHYQTDYH). Positions 123–155 (HGIKSEDENSGGEQTSSDHEESEEASDRDPDLQ) are disordered. The VLRF1 domain maps to 232–392 (PMAISALFMV…KKAWCELSYL (161 aa)). Gln-295 is an active-site residue. ANK repeat units follow at residues 470–500 (LTPT…DPTI) and 504–530 (LGRT…NLGE). Coiled-coil stretches lie at residues 544–582 (LSRE…QRFA) and 608–632 (TDEQ…KKKY). Over residues 578–589 (KQRFAKDAERGP) the composition is skewed to basic and acidic residues. Residues 578-632 (KQRFAKDAERGPGKKLTNIPSIQQQNLNSLTDEQRRRLMREQRARAAEERMKKKY) form a disordered region. Positions 595-608 (NIPSIQQQNLNSLT) are enriched in polar residues. Residues 609–632 (DEQRRRLMREQRARAAEERMKKKY) are compositionally biased toward basic and acidic residues.

This sequence belongs to the ANKZF1/VMS1 family. As to quaternary structure, associates with 60S ribosomal subunit. Interacts with CDC48. Interacts with NPL4.

It is found in the cytoplasm. It localises to the mitochondrion. The protein localises to the endoplasmic reticulum membrane. Functionally, endonuclease that cleaves polypeptidyl-tRNAs downstream of the ribosome-associated quality control (RQC) pathway to release incompletely synthesized polypeptides for degradation. The RQC pathway disassembles aberrantly stalled translation complexes to recycle or degrade the constituent parts. VMS1 acts downstream disassembly of stalled ribosomes and specifically cleaves off the terminal 3'-CCA nucleotides universal to all tRNAs from polypeptidyl-tRNAs, releasing (1) ubiquitinated polypeptides from 60S ribosomal subunit for degradation by the ERAD pathway and (2) cleaved tRNAs for recycling. Component of an evolutionarily conserved system for ubiquitin-mediated mitochondria-associated protein degradation (MAD), which is necessary to maintain mitochondrial, cellular, and organismal viability. This chain is tRNA endonuclease VMS1, found in Saccharomyces cerevisiae (strain ATCC 204508 / S288c) (Baker's yeast).